The primary structure comprises 415 residues: Putative transcription factor BOFH (415 aa).

A disordered region spans residues 159-221; that stretch reads SQEPVQHQDQ…NEGEDDDGMD (63 aa). The span at 174–183 shows a compositional bias: gly residues; it reads INGGGRGGYW. The span at 193 to 202 shows a compositional bias: basic residues; the sequence is QQQRRRKKRL. Over residues 206–220 the composition is skewed to acidic residues; sequence ETDDDGNEGEDDDGM. DNA-binding regions lie at residues 234 to 238, 303 to 310, and 374 to 377; these read REHPF, NKPKMRHY, and YVPT.

It belongs to the FLO/LFY family. In terms of tissue distribution, acts in the floral primordia.

It localises to the nucleus. Functionally, controls floral meristem identity. Is required very early in flower development and may act here as a transcription factor. This chain is Putative transcription factor BOFH, found in Brassica oleracea var. botrytis (Cauliflower).